Reading from the N-terminus, the 257-residue chain is Type III pantothenate kinase (257 aa).

6-13 (DVGNTSTK) contacts ATP. 109-112 (GADR) contacts substrate. D111 (proton acceptor) is an active-site residue. D132 lines the K(+) pocket. Residue T135 participates in ATP binding. A substrate-binding site is contributed by T187.

The protein belongs to the type III pantothenate kinase family. As to quaternary structure, homodimer. The cofactor is NH4(+). K(+) serves as cofactor.

Its subcellular location is the cytoplasm. It carries out the reaction (R)-pantothenate + ATP = (R)-4'-phosphopantothenate + ADP + H(+). It participates in cofactor biosynthesis; coenzyme A biosynthesis; CoA from (R)-pantothenate: step 1/5. Catalyzes the phosphorylation of pantothenate (Pan), the first step in CoA biosynthesis. This is Type III pantothenate kinase from Anaplasma marginale (strain St. Maries).